The chain runs to 320 residues: Solute carrier family 35 member B1 (320 aa).

Transmembrane regions (helical) follow at residues 9 to 29 (GLRL…YGIL), 49 to 69 (FALS…KLLI), 81 to 103 (QSWL…NSAL), 134 to 154 (YPLT…LFMY), 166 to 186 (TVGY…LTGV), 202 to 222 (MMLS…VLTG), 241 to 261 (IVLF…TVVY), and 283 to 303 (VILF…LVFL). The short motif at 316–320 (KKPSH) is the Di-lysine motif element.

It belongs to the nucleotide-sugar transporter family. SLC35B subfamily.

The protein resides in the endoplasmic reticulum membrane. In terms of biological role, probable sugar transporter. In Xenopus laevis (African clawed frog), this protein is Solute carrier family 35 member B1 (slc35b1).